Consider the following 130-residue polypeptide: Small ribosomal subunit protein uS9 (130 aa).

Belongs to the universal ribosomal protein uS9 family.

This is Small ribosomal subunit protein uS9 from Paraburkholderia phytofirmans (strain DSM 17436 / LMG 22146 / PsJN) (Burkholderia phytofirmans).